We begin with the raw amino-acid sequence, 224 residues long: LexA repressor (224 aa).

A DNA-binding region (H-T-H motif) is located at residues 31 to 51; sequence RAEIANTLGFKSANAAEEHLQ. Catalysis depends on for autocatalytic cleavage activity residues S142 and K179.

The protein belongs to the peptidase S24 family. In terms of assembly, homodimer.

It carries out the reaction Hydrolysis of Ala-|-Gly bond in repressor LexA.. Its function is as follows. Represses a number of genes involved in the response to DNA damage (SOS response), including recA and lexA. In the presence of single-stranded DNA, RecA interacts with LexA causing an autocatalytic cleavage which disrupts the DNA-binding part of LexA, leading to derepression of the SOS regulon and eventually DNA repair. This chain is LexA repressor, found in Delftia acidovorans (strain DSM 14801 / SPH-1).